Consider the following 359-residue polypeptide: Aminoacyl tRNA synthase complex-interacting multifunctional protein 1 (359 aa).

The tract at residues 52–92 (AVLKRLEQKGAEADQIIEYLKQQVALLKEKAVLQATLREEK) is required for fibroblast proliferation. The interaction with HSP90B1 stretch occupies residues 100-241 (KLKKEIEELK…APRTVISGLV (142 aa)). The tract at residues 149 to 163 (SVSTISCSIKEHSKG) is required for endothelial cell death. Residues 156 to 196 (SIKEHSKGGGEEKKVKEKTDKKGEKKEKKLQSAAPSADSKP) are disordered. Positions 157–185 (IKEHSKGGGEEKKVKEKTDKKGEKKEKKL) are enriched in basic and acidic residues. Residues 163-239 (GGGEEKKVKE…EAAPRTVISG (77 aa)) are required for endothelial cell migration. Residue K184 forms a Glycyl lysine isopeptide (Lys-Gly) (interchain with G-Cter in SUMO1) linkage. At S187 the chain carries Phosphoserine. Residues 198-299 (DVSRLDLRIG…NGSVPGDRIT (102 aa)) enclose the tRNA-binding domain. The residue at position 316 (K316) is an N6-succinyllysine.

In terms of assembly, homodimer. Part of the multisynthetase complex (MSC), a multisubunit complex that groups tRNA ligases for Arg (RARS1), Asp (DARS1), Gln (QARS1), Ile (IARS1), Leu (LARS1), Lys (KARS1), Met (MARS1) the bifunctional ligase for Glu and Pro (EPRS1) and the auxiliary subunits AIMP1/p43, AIMP2/p38 and EEF1E1/p18. Interacts (via N-terminus) with RARS1 (via N-terminus). Part of a complex composed of RARS1, QARS1 and AIMP1. Interacts (via C-terminus) with SMURF2. Interacts (via N-terminus) with HSP90B1/gp96 (via C-terminus). Interacts with PSMA7. Interacts with TARS3. Cleaved by caspase-7 in response to apoptosis to produce EMAP-II.

Its subcellular location is the nucleus. It is found in the cytoplasm. The protein resides in the cytosol. It localises to the secreted. The protein localises to the endoplasmic reticulum. Its subcellular location is the golgi apparatus. Its function is as follows. Non-catalytic component of the multisynthase complex. Stimulates the catalytic activity of cytoplasmic arginyl-tRNA synthase. Binds tRNA. Possesses inflammatory cytokine activity. Negatively regulates TGF-beta signaling through stabilization of SMURF2 by binding to SMURF2 and inhibiting its SMAD7-mediated degradation. Involved in glucose homeostasis through induction of glucagon secretion at low glucose levels. Promotes dermal fibroblast proliferation and wound repair. Regulates KDELR1-mediated retention of HSP90B1/gp96 in the endoplasmic reticulum. Plays a role in angiogenesis by inducing endothelial cell migration at low concentrations and endothelian cell apoptosis at high concentrations. Induces maturation of dendritic cells and monocyte cell adhesion. The chain is Aminoacyl tRNA synthase complex-interacting multifunctional protein 1 (AIMP1) from Cricetulus griseus (Chinese hamster).